A 423-amino-acid chain; its full sequence is Kynureninase (423 aa).

Pyridoxal 5'-phosphate is bound by residues Leu-105, Ser-106, 133 to 136, Asp-218, His-221, and Tyr-243; that span reads FPSD. Position 244 is an N6-(pyridoxal phosphate)lysine (Lys-244). Residues Trp-273 and Asn-301 each contribute to the pyridoxal 5'-phosphate site.

This sequence belongs to the kynureninase family. As to quaternary structure, homodimer. Pyridoxal 5'-phosphate serves as cofactor.

The enzyme catalyses L-kynurenine + H2O = anthranilate + L-alanine + H(+). The catalysed reaction is 3-hydroxy-L-kynurenine + H2O = 3-hydroxyanthranilate + L-alanine + H(+). The protein operates within amino-acid degradation; L-kynurenine degradation; L-alanine and anthranilate from L-kynurenine: step 1/1. It participates in cofactor biosynthesis; NAD(+) biosynthesis; quinolinate from L-kynurenine: step 2/3. Catalyzes the cleavage of L-kynurenine (L-Kyn) and L-3-hydroxykynurenine (L-3OHKyn) into anthranilic acid (AA) and 3-hydroxyanthranilic acid (3-OHAA), respectively. The sequence is that of Kynureninase from Xanthomonas oryzae pv. oryzae (strain KACC10331 / KXO85).